A 168-amino-acid chain; its full sequence is 3-isopropylmalate dehydratase small subunit (168 aa).

This sequence belongs to the LeuD family. LeuD type 2 subfamily. Heterodimer of LeuC and LeuD.

The enzyme catalyses (2R,3S)-3-isopropylmalate = (2S)-2-isopropylmalate. Its pathway is amino-acid biosynthesis; L-leucine biosynthesis; L-leucine from 3-methyl-2-oxobutanoate: step 2/4. In terms of biological role, catalyzes the isomerization between 2-isopropylmalate and 3-isopropylmalate, via the formation of 2-isopropylmaleate. The chain is 3-isopropylmalate dehydratase small subunit (leuD) from Sulfurisphaera tokodaii (strain DSM 16993 / JCM 10545 / NBRC 100140 / 7) (Sulfolobus tokodaii).